The following is a 555-amino-acid chain: MSQMIRPPIVLLKEGTDTSQGLPQLISNINACCAIVDTVRTTLGPRGMDKLIYQSERQVTISNDGATVMKLLDIVHPAARTLVDIAKSQDSEVGDGTTSVVILAGEFLKAAKPFLEEGIHPQIIIRAFRSACELAKQKIQELSVDIKPENMREFLEKCASTSMNSKLIASHKQFFSKMVVDAVQLLDDNIDLDMIGIKKESGGGLGDSQFIAGAAFKRTFFYAGFEQQPKHIKNPKVLCLNIELELKAEKDNAEIRISDPTKYQSLVNAEWKLFFDKLEAIHASGVNVVLSKLAIGDLATQFFADKNMFCAGRVPDDDIRRVCRATGAAIQNTTSNIIPDVIGTCDLFEEVQVGGQRYNLFTGCTMTQTATIILRGGGEQFIDEAERSLHDSIMIVRRARKHRSVVAGGGAIEMEVSKYLRDYSLSIEGKKQLLINAFAKALEVIPRQIADNAGFDSTDILNQLRQKHAQGEKWFGVDIVNEGICDTYESAIWEPSLVKLNSIVAATEATCLILSVDETVQNNQAEQAQAGPQINNQTRQALSRGRGVQAMRGRG.

The protein belongs to the TCP-1 chaperonin family. As to quaternary structure, heterooligomeric complex of about 850 to 900 kDa that forms two stacked rings, 12 to 16 nm in diameter.

The protein resides in the cytoplasm. Its function is as follows. Molecular chaperone; assists the folding of proteins upon ATP hydrolysis. Known to play a role, in vitro, in the folding of actin and tubulin. This Dictyostelium discoideum (Social amoeba) protein is T-complex protein 1 subunit eta (cct7).